A 188-amino-acid polypeptide reads, in one-letter code: Large ribosomal subunit protein uL6 (188 aa).

This sequence belongs to the universal ribosomal protein uL6 family. Part of the 50S ribosomal subunit.

This protein binds to the 23S rRNA, and is important in its secondary structure. It is located near the subunit interface in the base of the L7/L12 stalk, and near the tRNA binding site of the peptidyltransferase center. The protein is Large ribosomal subunit protein uL6 of Myxococcus xanthus (strain DK1622).